Reading from the N-terminus, the 1380-residue chain is DNA-directed RNA polymerase subunit beta (1380 aa).

The protein belongs to the RNA polymerase beta chain family. In terms of assembly, the RNAP catalytic core consists of 2 alpha, 1 beta, 1 beta' and 1 omega subunit. When a sigma factor is associated with the core the holoenzyme is formed, which can initiate transcription.

The enzyme catalyses RNA(n) + a ribonucleoside 5'-triphosphate = RNA(n+1) + diphosphate. Its function is as follows. DNA-dependent RNA polymerase catalyzes the transcription of DNA into RNA using the four ribonucleoside triphosphates as substrates. This is DNA-directed RNA polymerase subunit beta from Alcanivorax borkumensis (strain ATCC 700651 / DSM 11573 / NCIMB 13689 / SK2).